A 493-amino-acid chain; its full sequence is Transcript termination protein A18 (493 aa).

A Helicase ATP-binding domain is found at 100–256 (MIESKRPLYI…NSIINIAKLS (157 aa)). 113-120 (LACGFGKT) contributes to the ATP binding site. Positions 206-209 (DESH) match the DESH box motif.

Belongs to the helicase family. Poxviruses subfamily. In terms of assembly, interacts with G2. Might be part of a transcription complex composed at least of G2, A18, and H5.

The protein resides in the virion. DNA helicase which seems to act as a postreplicative transcription termination factor. Involved in ATP-dependent release of nascent RNA. Forms a stable complex with single-stranded DNA, and to a lesser extent RNA. This chain is Transcript termination protein A18, found in Rabbitpox virus (strain Utrecht) (RPV).